Consider the following 238-residue polypeptide: Monocyte to macrophage differentiation factor (238 aa).

Over 1–28 (MQFRNRFQRFMNHRAPANGRYKPTCYEH) the chain is Cytoplasmic. A helical membrane pass occupies residues 29-49 (AANCYTHAFLIVPAIVGSALL). Topologically, residues 50-61 (HRLSDDCWEKIT) are lumenal. A helical membrane pass occupies residues 62 to 82 (AWIYGMGLCALFIVSTVFHIV). Residues 83–101 (SWKKSHLRTVEHCFHMCDR) lie on the Cytoplasmic side of the membrane. The helical transmembrane segment at 102–122 (MVIYFFIAASYAPWLNLRELG) threads the bilayer. Pro-123 is a topological domain (lumenal). Residues 124-144 (LASHMRWFIWLMAAGGTIYVF) traverse the membrane as a helical segment. Topologically, residues 145-151 (LYHEKYK) are cytoplasmic. Residues 152–172 (VVELFFYLTMGFSPALVVTSM) traverse the membrane as a helical segment. The Lumenal portion of the chain corresponds to 173-174 (NN). Residues 175–195 (TDGLQELACGGLIYCLGVVFF) traverse the membrane as a helical segment. At 196-198 (KSD) the chain is on the cytoplasmic side. Residues 199–219 (GIIPFAHAIWHLFVATAAAVH) form a helical membrane-spanning segment. Over 220 to 238 (YYAIWKYLYRSPTDFIRHL) the chain is Lumenal.

The protein belongs to the ADIPOR family. Preferentially expressed in the brain.

It localises to the late endosome membrane. The protein resides in the lysosome membrane. Its function is as follows. Is involved in the dynamics of lysosomal membranes associated with microglial activation following brain lesion. The polypeptide is Monocyte to macrophage differentiation factor (Rattus norvegicus (Rat)).